The primary structure comprises 252 residues: T-box transcription factor mls-1 (252 aa).

The segment at residues 40–210 (LWRRFHNLGT…SNPFAKGFRE (171 aa)) is a DNA-binding region (T-box).

May interact with unc-37.

Its subcellular location is the nucleus. Probable transcription factor required for the cell fate specification of non-striated uterine muscle precursor cells. Furthermore, may function with the transcriptional corepressor unc-37. The sequence is that of T-box transcription factor mls-1 from Caenorhabditis elegans.